The sequence spans 416 residues: Phosphatidylinositol 5-phosphate 4-kinase type-2 gamma (416 aa).

One can recognise a PIPK domain in the interval 38–415 (ASDPMLSVFM…RFREFISNIF (378 aa)).

Post-translationally, phosphorylated, phosphorylation is induced by EGF.

The protein resides in the endoplasmic reticulum. Its subcellular location is the cytoplasm. The enzyme catalyses a 1,2-diacyl-sn-glycero-3-phospho-(1D-myo-inositol-5-phosphate) + ATP = a 1,2-diacyl-sn-glycero-3-phospho-(1D-myo-inositol-4,5-bisphosphate) + ADP + H(+). The catalysed reaction is 1,2-dihexadecanoyl-sn-glycero-3-phospho-(1D-myo-inositol-5-phosphate) + ATP = 1,2-dihexadecanoyl-sn-glycero-3-phospho-(1D-myo-inositol-4,5-bisphosphate) + ADP + H(+). It catalyses the reaction 1,2-dihexadecanoyl-sn-glycero-3-phospho-(1D-myo-inositol-5-phosphate) + GTP = 1,2-dihexadecanoyl-sn-glycero-3-phospho-(1D-myo-inositol-4,5-bisphosphate) + GDP + H(+). In terms of biological role, phosphatidylinositol 5-phosphate 4-kinase with low enzymatic activity. May be a GTP sensor, has higher GTP-dependent kinase activity than ATP-dependent kinase activity. The polypeptide is Phosphatidylinositol 5-phosphate 4-kinase type-2 gamma (pip4k2c) (Danio rerio (Zebrafish)).